Consider the following 246-residue polypeptide: 3-deoxy-manno-octulosonate cytidylyltransferase (246 aa).

The protein belongs to the KdsB family.

It localises to the cytoplasm. The catalysed reaction is 3-deoxy-alpha-D-manno-oct-2-ulosonate + CTP = CMP-3-deoxy-beta-D-manno-octulosonate + diphosphate. Its pathway is nucleotide-sugar biosynthesis; CMP-3-deoxy-D-manno-octulosonate biosynthesis; CMP-3-deoxy-D-manno-octulosonate from 3-deoxy-D-manno-octulosonate and CTP: step 1/1. It participates in bacterial outer membrane biogenesis; lipopolysaccharide biosynthesis. In terms of biological role, activates KDO (a required 8-carbon sugar) for incorporation into bacterial lipopolysaccharide in Gram-negative bacteria. This Bradyrhizobium sp. (strain ORS 278) protein is 3-deoxy-manno-octulosonate cytidylyltransferase.